Here is a 57-residue protein sequence, read N- to C-terminus: Large ribosomal subunit protein bL32 (57 aa).

Belongs to the bacterial ribosomal protein bL32 family.

The chain is Large ribosomal subunit protein bL32 from Ureaplasma parvum serovar 3 (strain ATCC 27815 / 27 / NCTC 11736).